The sequence spans 236 residues: MGQKVNPIAFRTGVTRGWGSRWYASKQDFADLLVEDRKIREFITKHPKKSQYKSAGIDRIEIERTRDEVRVMLYVARPGLIIGKKGQEIEILQAELQNLVGRRINLKVEEVGRPELQAQLVAEDISQQLAKRSSFRRTMKRMLEQTMDAGAKGIKIQMAGRLGGAEMARREKQSAGSIPLSTLQAKIDYGFTEAMTPQGHIGIQVWINQGTYGDDNDGADAQTGQASKKPKRSYKR.

Positions I39 to G112 constitute a KH type-2 domain. The tract at residues Y212–R236 is disordered.

The protein belongs to the universal ribosomal protein uS3 family. As to quaternary structure, part of the 30S ribosomal subunit. Forms a tight complex with proteins S10 and S14.

Functionally, binds the lower part of the 30S subunit head. Binds mRNA in the 70S ribosome, positioning it for translation. The protein is Small ribosomal subunit protein uS3 of Rhodopirellula baltica (strain DSM 10527 / NCIMB 13988 / SH1).